Consider the following 48-residue polypeptide: MAGTVVLRCCTSVTKVRTWKRCSKQIKEQRARLYIIWKCAVFLLSSHD.

A helical transmembrane segment spans residues threonine 4 to serine 23. Residues arginine 17–aspartate 48 are required for DVL/RTFL small polypeptide activity.

This sequence belongs to the DVL/RTFL small polypeptides family.

The protein localises to the cell membrane. In terms of biological role, small polypeptide acting as a regulatory molecule which coordinates cellular responses required for differentiation, growth and development, probably by restricting polar cell proliferation in lateral organs and coordinating socket cell recruitment and differentiation at trichome sites. This is Small polypeptide DEVIL 14 from Arabidopsis thaliana (Mouse-ear cress).